We begin with the raw amino-acid sequence, 280 residues long: ESX-1 secretion-associated protein EspJ (280 aa).

Serine 70 bears the Phosphoserine mark. 2 stretches are compositionally biased toward low complexity: residues 167–181 (QTIS…QSAQ) and 246–280 (PAQA…TTTL). The segment at 167-280 (QTISQTAQQA…TPAPSTTTTL (114 aa)) is disordered.

Post-translationally, phosphorylated at Ser-70.

The protein localises to the secreted. Its function is as follows. Could be involved in regulation of growth and intracellular survival. This is ESX-1 secretion-associated protein EspJ from Mycobacterium tuberculosis (strain CDC 1551 / Oshkosh).